The following is a 455-amino-acid chain: Fez family zinc finger protein 2 (455 aa).

The disordered stretch occupies residues 1–22; sequence MASSASLETMVPPACPRAGASP. Positions 27 to 42 match the Engrailed homology 1 repressor motif; it reads TLAFSIERIMAKTSEP. 6 consecutive C2H2-type zinc fingers follow at residues 272–294, 300–322, 328–350, 356–378, 384–406, and 412–435; these read FTCE…MPVH, FVCK…KIIH, HKCN…IRIH, FVCE…KLTH, YKCT…MHTH, and FTCA…RKLH.

It belongs to the krueppel C2H2-type zinc-finger protein family. Highly expressed in neocortical layer V, moderately expressed in layer VI. Expressed in subcortically projecting neurons.

Its subcellular location is the nucleus. Transcription repressor. Required for the specification of corticospinal motor neurons and other subcerebral projection neurons. May play a role in layer and neuronal subtype-specific patterning of subcortical projections and axonal fasciculation. Controls the development of dendritic arborization and spines of large layer V pyramidal neurons. Plays a role in rostro-caudal patterning of the diencephalon and in prethalamic formation. The chain is Fez family zinc finger protein 2 (Fezf2) from Mus musculus (Mouse).